A 106-amino-acid chain; its full sequence is Follitropin subunit beta (106 aa).

Cystine bridges form between Cys-1-Cys-49, Cys-15-Cys-64, Cys-18-Cys-102, Cys-26-Cys-80, Cys-30-Cys-82, and Cys-85-Cys-92. 2 N-linked (GlcNAc...) asparagine glycosylation sites follow: Asn-5 and Asn-22.

This sequence belongs to the glycoprotein hormones subunit beta family. Heterodimer. The active follitropin is a heterodimer composed of an alpha chain/CGA shared with other hormones and a unique beta chain/FSHB shown here.

Its subcellular location is the secreted. Together with the alpha chain CGA constitutes follitropin, the follicle-stimulating hormone, and provides its biological specificity to the hormone heterodimer. Binds FSHR, a G protein-coupled receptor, on target cells to activate downstream signaling pathways. Follitropin is involved in follicle development and spermatogenesis in reproductive organs. The polypeptide is Follitropin subunit beta (FSHB) (Struthio camelus (Common ostrich)).